We begin with the raw amino-acid sequence, 270 residues long: Small ribosomal subunit protein uS2 (270 aa).

Over residues 207-225 (EEPENTEEAAEEAATEEVV) the composition is skewed to acidic residues. The tract at residues 207-270 (EEPENTEEAA…SESAPAPVAA (64 aa)) is disordered. The span at 226–258 (ETAAAEAAAATNADNWDVAPDAGAGAADWAATD) shows a compositional bias: low complexity.

It belongs to the universal ribosomal protein uS2 family. In terms of assembly, component of the small ribosomal subunit. Mature ribosomes consist of a small (40S) and a large (60S) subunit. The 40S subunit contains about 33 different proteins and 1 molecule of RNA (18S). The 60S subunit contains about 49 different proteins and 3 molecules of RNA (25S, 5.8S and 5S). Interacts with RPS21.

It is found in the cytoplasm. In terms of biological role, required for the assembly and/or stability of the 40S ribosomal subunit. Required for the processing of the 20S rRNA-precursor to mature 18S rRNA in a late step of the maturation of 40S ribosomal subunits. This chain is Small ribosomal subunit protein uS2, found in Yarrowia lipolytica (strain CLIB 122 / E 150) (Yeast).